Reading from the N-terminus, the 158-residue chain is SsrA-binding protein (158 aa).

Residues 133–158 (KIHDKRETEAKRDWNRQKQRLLKDNA) form a disordered region. Basic and acidic residues predominate over residues 136 to 158 (DKRETEAKRDWNRQKQRLLKDNA).

This sequence belongs to the SmpB family.

Its subcellular location is the cytoplasm. Functionally, required for rescue of stalled ribosomes mediated by trans-translation. Binds to transfer-messenger RNA (tmRNA), required for stable association of tmRNA with ribosomes. tmRNA and SmpB together mimic tRNA shape, replacing the anticodon stem-loop with SmpB. tmRNA is encoded by the ssrA gene; the 2 termini fold to resemble tRNA(Ala) and it encodes a 'tag peptide', a short internal open reading frame. During trans-translation Ala-aminoacylated tmRNA acts like a tRNA, entering the A-site of stalled ribosomes, displacing the stalled mRNA. The ribosome then switches to translate the ORF on the tmRNA; the nascent peptide is terminated with the 'tag peptide' encoded by the tmRNA and targeted for degradation. The ribosome is freed to recommence translation, which seems to be the essential function of trans-translation. This chain is SsrA-binding protein, found in Ruegeria pomeroyi (strain ATCC 700808 / DSM 15171 / DSS-3) (Silicibacter pomeroyi).